Reading from the N-terminus, the 89-residue chain is Elongation factor 1-beta (89 aa).

The protein belongs to the EF-1-beta/EF-1-delta family.

In terms of biological role, promotes the exchange of GDP for GTP in EF-1-alpha/GDP, thus allowing the regeneration of EF-1-alpha/GTP that could then be used to form the ternary complex EF-1-alpha/GTP/AAtRNA. This Methanococcus maripaludis (strain C7 / ATCC BAA-1331) protein is Elongation factor 1-beta.